We begin with the raw amino-acid sequence, 131 residues long: Small ribosomal subunit protein uS8 (131 aa).

It belongs to the universal ribosomal protein uS8 family. As to quaternary structure, part of the 30S ribosomal subunit. Contacts proteins S5 and S12.

Its function is as follows. One of the primary rRNA binding proteins, it binds directly to 16S rRNA central domain where it helps coordinate assembly of the platform of the 30S subunit. This chain is Small ribosomal subunit protein uS8, found in Chromobacterium violaceum (strain ATCC 12472 / DSM 30191 / JCM 1249 / CCUG 213 / NBRC 12614 / NCIMB 9131 / NCTC 9757 / MK).